A 637-amino-acid chain; its full sequence is Threonine--tRNA ligase (637 aa).

The region spanning 1-61 (MIKVTLKDGK…DKDCNLEILT (61 aa)) is the TGS domain. The tract at residues 242–532 (DHRKIGKELD…LIEHYAGAFP (291 aa)) is catalytic. Zn(2+) contacts are provided by Cys-333, His-384, and His-509.

The protein belongs to the class-II aminoacyl-tRNA synthetase family. As to quaternary structure, homodimer. Zn(2+) is required as a cofactor.

The protein resides in the cytoplasm. It catalyses the reaction tRNA(Thr) + L-threonine + ATP = L-threonyl-tRNA(Thr) + AMP + diphosphate + H(+). Functionally, catalyzes the attachment of threonine to tRNA(Thr) in a two-step reaction: L-threonine is first activated by ATP to form Thr-AMP and then transferred to the acceptor end of tRNA(Thr). Also edits incorrectly charged L-seryl-tRNA(Thr). The polypeptide is Threonine--tRNA ligase (Clostridium acetobutylicum (strain ATCC 824 / DSM 792 / JCM 1419 / IAM 19013 / LMG 5710 / NBRC 13948 / NRRL B-527 / VKM B-1787 / 2291 / W)).